The chain runs to 266 residues: Hydroxyethylthiazole kinase (266 aa).

Met-46 contacts substrate. Residues Lys-122 and Thr-166 each contribute to the ATP site. Residue Gly-193 coordinates substrate.

The protein belongs to the Thz kinase family. Mg(2+) serves as cofactor.

It carries out the reaction 5-(2-hydroxyethyl)-4-methylthiazole + ATP = 4-methyl-5-(2-phosphooxyethyl)-thiazole + ADP + H(+). It functions in the pathway cofactor biosynthesis; thiamine diphosphate biosynthesis; 4-methyl-5-(2-phosphoethyl)-thiazole from 5-(2-hydroxyethyl)-4-methylthiazole: step 1/1. Catalyzes the phosphorylation of the hydroxyl group of 4-methyl-5-beta-hydroxyethylthiazole (THZ). The polypeptide is Hydroxyethylthiazole kinase (Caldivirga maquilingensis (strain ATCC 700844 / DSM 13496 / JCM 10307 / IC-167)).